The chain runs to 322 residues: NADH-quinone oxidoreductase subunit H (322 aa).

9 helical membrane passes run F15–V35, N50–F69, F81–I101, I114–G134, A149–A169, I186–V206, F237–F257, I265–I285, and W302–V322.

This sequence belongs to the complex I subunit 1 family. In terms of assembly, NDH-1 is composed of 13 different subunits. Subunits NuoA, H, J, K, L, M, N constitute the membrane sector of the complex.

The protein resides in the cell membrane. The catalysed reaction is a quinone + NADH + 5 H(+)(in) = a quinol + NAD(+) + 4 H(+)(out). NDH-1 shuttles electrons from NADH, via FMN and iron-sulfur (Fe-S) centers, to quinones in the respiratory chain. The immediate electron acceptor for the enzyme in this species is believed to be ubiquinone. Couples the redox reaction to proton translocation (for every two electrons transferred, four hydrogen ions are translocated across the cytoplasmic membrane), and thus conserves the redox energy in a proton gradient. This subunit may bind ubiquinone. The polypeptide is NADH-quinone oxidoreductase subunit H (Buchnera aphidicola subsp. Acyrthosiphon pisum (strain 5A)).